A 479-amino-acid polypeptide reads, in one-letter code: Nuclear receptor subfamily 6 group A member 1 (479 aa).

The disordered stretch occupies residues 1-32; the sequence is MERDERPPSGGGGGGGSAGFLEPPAALPPPPR. Over residues 9–18 the composition is skewed to gly residues; the sequence is SGGGGGGGSA. Residues 57–132 constitute a DNA-binding region (nuclear receptor); the sequence is QRTCLICGDR…MGMNRKAIRE (76 aa). Positions 60, 63, 77, 80, 96, 102, 112, and 115 each coordinate Zn(2+). NR C4-type zinc fingers lie at residues 60–80 and 96–120; these read CLIC…CEGC and CSRD…LLKC. 2 disordered regions span residues 131–150 and 162–198; these read REDG…QISE and FEEE…TLSS. Residues 165–177 show a composition bias toward basic and acidic residues; that stretch reads EANHWSNHGDSDH. Residues 172–252 are sufficient for interaction with UIMC1; that stretch reads HGDSDHSSPG…RSLDPQSYSL (81 aa). The segment covering 178–198 has biased composition (polar residues); that stretch reads SSPGNRASESNQPSPGSTLSS. The 232-residue stretch at 248–479 folds into the NR LBD domain; sequence QSYSLIHQLV…HSCKTSVGKE (232 aa).

Belongs to the nuclear hormone receptor family. NR6 subfamily. As to quaternary structure, homodimer. Interacts with UIMC1.

The protein localises to the nucleus. In terms of biological role, orphan nuclear receptor that binds to a response element containing the sequence 5'-TCAAGGTCA-3'. Acts as a regulator of embryonic stem cell pluripotency by mediating repression of POU5F1/OCT4: binds to the DR0 element within the POU5F1/OCT4 promoter and inhibits POU5F1/OCT4 expression during embryonic stem cell differentiation. Involved in the regulation of gene expression in germ cell development during gametogenesis. This Sus scrofa (Pig) protein is Nuclear receptor subfamily 6 group A member 1 (NR6A1).